The following is a 191-amino-acid chain: MAP6 domain-containing protein 1 (191 aa).

Residues Cys5, Cys10, and Cys11 are each lipidated (S-palmitoyl cysteine). The tract at residues 31 to 106 is disordered; that stretch reads HGYSDPGSEE…RGQSSAPPTR (76 aa). Phosphoserine occurs at positions 38 and 41. Mn regions lie at residues 123-136 and 158-170; these read TTSY…WTGV and DPSP…VPEV. Ser160 bears the Phosphoserine mark.

The protein belongs to the STOP family. As to quaternary structure, interacts with calmodulin. Palmitoylated. Palmitoylation enhances association with microtubules. As to expression, expressed in brain. Found in neurons in primary cultures, but absent in glial cells.

It is found in the golgi apparatus. It localises to the cytoplasm. Its subcellular location is the cytoskeleton. In terms of biological role, may have microtubule-stabilizing activity. This chain is MAP6 domain-containing protein 1 (Map6d1), found in Mus musculus (Mouse).